Consider the following 159-residue polypeptide: Ribosomal RNA large subunit methyltransferase H (159 aa).

S-adenosyl-L-methionine-binding positions include Leu-76, Gly-108, and 127–132; that span reads FGQLTL.

Belongs to the RNA methyltransferase RlmH family. As to quaternary structure, homodimer.

Its subcellular location is the cytoplasm. It carries out the reaction pseudouridine(1915) in 23S rRNA + S-adenosyl-L-methionine = N(3)-methylpseudouridine(1915) in 23S rRNA + S-adenosyl-L-homocysteine + H(+). In terms of biological role, specifically methylates the pseudouridine at position 1915 (m3Psi1915) in 23S rRNA. This is Ribosomal RNA large subunit methyltransferase H from Streptococcus gordonii (strain Challis / ATCC 35105 / BCRC 15272 / CH1 / DL1 / V288).